The chain runs to 451 residues: MKGTIVLYPAMGRGHIVPMVELGKFLSTHHHATLSVKILLPSPPNSTTLRYITAVSAATPSITFLHLSPSQHLLRVLQTLISQSSKPKAFILDFFNHSAADVTQTLNIPTYYYFPNAASCVALMLYTPTIHHNTKNGNSSYNDTLRRIPGLPPLSPEDMPAPLLDRRSFESFANMSIQMRKSDGIIVNTFEKLENKAFLALKNGTCVSETSRSHSSTPETRKPRIFCVGPLVSNGGGEHDNDDSGCMSWLDLQPSRTVVFLSFGSYGRFSKSQIREIALGLERSGQRFLWVVRDPYERSELSLEELLPKGFLERTKERGMVVKNWAPQVKVLSHDSVGGFVTHCGWNSVLEAVSWGVPMVAWPLYAEQRLNRVVMVEEMKVALPLKEVDEDGFVRASELEERVRELMDSERGRGKEVRKRVLGATNDAVAALSDGGSSRIELNDLVGLWMQ.

Histidine 15 functions as the Proton acceptor in the catalytic mechanism. Residue histidine 15 coordinates an anthocyanidin. The Charge relay role is filled by aspartate 93. UDP-alpha-D-glucose contacts are provided by alanine 326, glutamine 328, histidine 343, tryptophan 346, asparagine 347, serine 348, and glutamate 351. Alanine 366 is an an anthocyanidin binding site. Residues glutamate 367 and glutamine 368 each coordinate UDP-alpha-D-glucose.

The protein belongs to the UDP-glycosyltransferase family. As to expression, expressed in roots. Detected in stems and leaves.

It catalyses the reaction a 7-hydroxyisoflavone + UDP-alpha-D-glucose = a 7-hydroxyisoflavone 7-O-beta-D-glucoside + UDP + H(+). Functionally, isoflavone 7-O-glucosyltransferase converting daidzein to daidzin, genistein to genistin and formononetin to ononin. Shows some activity toward the flavanones liquiritigenin and naringenin, but not toward cyanidin, isoliquiritigenin, apigenin, luteolin, kaempferol, quercetin, daidzin and puerarin. The sequence is that of UDP-glycosyltransferase 13 from Pueraria montana var. lobata (Kudzu vine).